A 1197-amino-acid chain; its full sequence is DNA-directed RNA polymerase subunit beta (1197 aa).

The segment covering 1172–1185 has biased composition (basic and acidic residues); that stretch reads KEQEEKKAQQEAEK. The interval 1172–1197 is disordered; that stretch reads KEQEEKKAQQEAEKAQAASAEDPSAE. The span at 1186–1197 shows a compositional bias: low complexity; the sequence is AQAASAEDPSAE.

It belongs to the RNA polymerase beta chain family. As to quaternary structure, the RNAP catalytic core consists of 2 alpha, 1 beta, 1 beta' and 1 omega subunit. When a sigma factor is associated with the core the holoenzyme is formed, which can initiate transcription.

It catalyses the reaction RNA(n) + a ribonucleoside 5'-triphosphate = RNA(n+1) + diphosphate. Functionally, DNA-dependent RNA polymerase catalyzes the transcription of DNA into RNA using the four ribonucleoside triphosphates as substrates. The chain is DNA-directed RNA polymerase subunit beta from Latilactobacillus sakei subsp. sakei (strain 23K) (Lactobacillus sakei subsp. sakei).